Here is a 189-residue protein sequence, read N- to C-terminus: Probable DNA-directed RNA polymerase subunit delta (189 aa).

Residues 14-81 (LSMIEVAHAI…GENVWALRTW (68 aa)) form the HTH HARE-type domain. 2 stretches are compositionally biased toward acidic residues: residues 90–100 (EVDHPEDDGDE) and 118–189 (EGDD…EDEE). The tract at residues 90-189 (EVDHPEDDGD…DDLDDDEDEE (100 aa)) is disordered.

It belongs to the RpoE family. As to quaternary structure, RNAP is composed of a core of 2 alpha, a beta and a beta' subunits. The core is associated with a delta subunit and one of several sigma factors.

Its function is as follows. Participates in both the initiation and recycling phases of transcription. In the presence of the delta subunit, RNAP displays an increased specificity of transcription, a decreased affinity for nucleic acids, and an increased efficiency of RNA synthesis because of enhanced recycling. This is Probable DNA-directed RNA polymerase subunit delta from Lactobacillus delbrueckii subsp. bulgaricus (strain ATCC 11842 / DSM 20081 / BCRC 10696 / JCM 1002 / NBRC 13953 / NCIMB 11778 / NCTC 12712 / WDCM 00102 / Lb 14).